The following is a 23-amino-acid chain: Phallacidin proprotein 1 (23 aa).

Pro-1 is a propeptide. The cyclopeptide (Ala-Pro) cross-link spans 2–8 (AWLVDCP). Positions 3–7 (WLVDC) form a cross-link, 2'-cysteinyl-6'-hydroxytryptophan sulfoxide (Trp-Cys). A propeptide spanning residues 9 to 23 (CVGDDINRLLTRGEK) is cleaved from the precursor.

Belongs to the MSDIN fungal toxin family. Processed by the macrocyclase-peptidase enzyme POPB to yield a toxic cyclic heptapeptide. POPB first removes 10 residues from the N-terminus. Conformational trapping of the remaining peptide forces the enzyme to release this intermediate rather than proceed to macrocyclization. The enzyme rebinds the remaining peptide in a different conformation and catalyzes macrocyclization of the N-terminal 7 residues.

Major toxin that belongs to the bicyclic heptapeptides called phallotoxins. Although structurally related to amatoxins, phallotoxins have a different mode of action, which is the stabilization of F-actin. Phallotoxins are poisonous when administered parenterally, but not orally because of poor absorption. The polypeptide is Phallacidin proprotein 1 (Amanita phalloides (Death cap)).